Consider the following 291-residue polypeptide: Insulin-like growth factor-binding protein 3 (291 aa).

A signal peptide spans 1-27 (MQRARPTLWAAALTLLVLLRGPPVARA). Residues 28–134 (GASSAGLGPV…AYLLPAPPAP (107 aa)) form an IGF-binding region. The region spanning 36 to 117 (PVVRCEPCDA…LDGRGLCVNA (82 aa)) is the IGFBP N-terminal domain. 6 cysteine pairs are disulfide-bonded: Cys-40-Cys-67, Cys-43-Cys-69, Cys-51-Cys-70, Cys-58-Cys-73, Cys-81-Cys-94, and Cys-88-Cys-114. 2 N-linked (GlcNAc...) (complex) asparagine glycosylation sites follow: Asn-116 and Asn-136. 2 disordered regions span residues 130 to 162 (APPAPGNASESEEDRSAGSVESPSVSSTHRVSD) and 189 to 211 (DYESQSTDTQNFSSESKRETEYG). Over residues 146 to 156 (AGSVESPSVSS) the composition is skewed to low complexity. Residue Ser-148 is modified to Phosphoserine; by FAM20C. Positions 191–202 (ESQSTDTQNFSS) are enriched in polar residues. Residue Ser-194 is modified to Phosphoserine; by CK2. The N-linked (GlcNAc...) (complex) asparagine glycan is linked to Asn-199. Ser-201 bears the Phosphoserine; by FAM20C mark. Ser-202 carries the post-translational modification Phosphoserine; by CK2. In terms of domain architecture, Thyroglobulin type-1 spans 210 to 285 (YGPCRREMED…TTKGKEDVHC (76 aa)). Cystine bridges form between Cys-213-Cys-240, Cys-251-Cys-262, and Cys-264-Cys-285.

In terms of assembly, interacts with XLKD1. Binds IGF2 more than IGF1. Forms a ternary complex of about 140 to 150 kDa with IGF1 or IGF2 and a 85 kDa glycoprotein (ALS). Interacts with humanin; humanin competes with importin KPNB1 for binding to IGFBP3, blocking IGFBP3 nuclear import and IGFBP3-mediated apoptosis. Interacts with TMEM219. Interacts with RXRA; this interaction modulates the transcriptional activity of RXRA. Interacts with LRP1; this interaction mediates cell growth inhibition independent of IGF1. Phosphorylated by FAM20C in the extracellular medium. Phosphorylated by CK2; resulting in decreased nuclear localization. In terms of tissue distribution, expressed by most tissues. Present in plasma.

Its subcellular location is the secreted. The protein localises to the nucleus. In terms of biological role, multifunctional protein that plays a critical role in regulating the availability of IGFs such as IGF1 and IGF2 to their receptors and thereby regulates IGF-mediated cellular processes including proliferation, differentiation, and apoptosis in a cell-type specific manner. Also exhibits IGF-independent antiproliferative and apoptotic effects mediated by its receptor TMEM219/IGFBP-3R. Inhibits the positive effect of humanin on insulin sensitivity. Promotes testicular germ cell apoptosis. Acts via LRP-1/alpha2M receptor, also known as TGF-beta type V receptor, to mediate cell growth inhibition independent of IGF1. Mechanistically, induces serine-specific dephosphorylation of IRS1 or IRS2 upon ligation to its receptor, leading to the inhibitory cascade. In the nucleus, interacts with transcription factors such as retinoid X receptor-alpha/RXRA to regulate transcriptional signaling and apoptosis. This is Insulin-like growth factor-binding protein 3 (IGFBP3) from Homo sapiens (Human).